The following is a 342-amino-acid chain: Protein RecA (342 aa).

An ATP-binding site is contributed by 65–72 (GPESSGKT).

The protein belongs to the RecA family.

The protein localises to the cytoplasm. Its function is as follows. Can catalyze the hydrolysis of ATP in the presence of single-stranded DNA, the ATP-dependent uptake of single-stranded DNA by duplex DNA, and the ATP-dependent hybridization of homologous single-stranded DNAs. It interacts with LexA causing its activation and leading to its autocatalytic cleavage. This is Protein RecA from Caldanaerobacter subterraneus subsp. tengcongensis (strain DSM 15242 / JCM 11007 / NBRC 100824 / MB4) (Thermoanaerobacter tengcongensis).